We begin with the raw amino-acid sequence, 217 residues long: Thiamine-phosphate synthase (217 aa).

4-amino-2-methyl-5-(diphosphooxymethyl)pyrimidine contacts are provided by residues 39–43 and N71; that span reads QLRRK. Mg(2+) is bound by residues D72 and D91. Position 110 (S110) interacts with 4-amino-2-methyl-5-(diphosphooxymethyl)pyrimidine. Position 137 to 139 (137 to 139) interacts with 2-[(2R,5Z)-2-carboxy-4-methylthiazol-5(2H)-ylidene]ethyl phosphate; the sequence is SPT. Residue K140 coordinates 4-amino-2-methyl-5-(diphosphooxymethyl)pyrimidine. Residues G173 and 193 to 194 contribute to the 2-[(2R,5Z)-2-carboxy-4-methylthiazol-5(2H)-ylidene]ethyl phosphate site; that span reads IS.

Belongs to the thiamine-phosphate synthase family. Requires Mg(2+) as cofactor.

It catalyses the reaction 2-[(2R,5Z)-2-carboxy-4-methylthiazol-5(2H)-ylidene]ethyl phosphate + 4-amino-2-methyl-5-(diphosphooxymethyl)pyrimidine + 2 H(+) = thiamine phosphate + CO2 + diphosphate. It carries out the reaction 2-(2-carboxy-4-methylthiazol-5-yl)ethyl phosphate + 4-amino-2-methyl-5-(diphosphooxymethyl)pyrimidine + 2 H(+) = thiamine phosphate + CO2 + diphosphate. The enzyme catalyses 4-methyl-5-(2-phosphooxyethyl)-thiazole + 4-amino-2-methyl-5-(diphosphooxymethyl)pyrimidine + H(+) = thiamine phosphate + diphosphate. Its pathway is cofactor biosynthesis; thiamine diphosphate biosynthesis; thiamine phosphate from 4-amino-2-methyl-5-diphosphomethylpyrimidine and 4-methyl-5-(2-phosphoethyl)-thiazole: step 1/1. Condenses 4-methyl-5-(beta-hydroxyethyl)thiazole monophosphate (THZ-P) and 2-methyl-4-amino-5-hydroxymethyl pyrimidine pyrophosphate (HMP-PP) to form thiamine monophosphate (TMP). This Bordetella bronchiseptica (strain ATCC BAA-588 / NCTC 13252 / RB50) (Alcaligenes bronchisepticus) protein is Thiamine-phosphate synthase.